A 558-amino-acid polypeptide reads, in one-letter code: Protein NRT1/ PTR FAMILY 2.7 (558 aa).

12 consecutive transmembrane segments (helical) span residues 31–51, 63–83, 90–110, 140–162, 178–198, 204–224, 319–339, 357–377, 399–419, 440–460, 479–499, and 518–538; these read FMIA…LNLI, IAAA…PAVA, FFGT…GVAL, LGVL…FTLA, FFNW…TAIV, ISWT…FLVF, IIPL…QLSL, IPAG…IIVN, VGIG…VEAK, VLWL…HFPG, SITS…IDLI, and VYWI…VCSW.

This sequence belongs to the major facilitator superfamily. Proton-dependent oligopeptide transporter (POT/PTR) (TC 2.A.17) family. Expressed in shoots and in the cortex of mature roots. Not expressed in root tip meristematic cells.

Its subcellular location is the cell membrane. Functionally, transporter involved in a passive nitrate efflux. Not competent for chloride transport. The polypeptide is Protein NRT1/ PTR FAMILY 2.7 (NPF2.7) (Arabidopsis thaliana (Mouse-ear cress)).